The primary structure comprises 509 residues: Bestrophin-2a (509 aa).

Topologically, residues Met-1 to Leu-31 are cytoplasmic. Ca(2+) is bound at residue Ala-10. A helical transmembrane segment spans residues Leu-32–Arg-51. The Extracellular segment spans residues Phe-52 to Arg-60. Residues Tyr-61–Leu-82 traverse the membrane as a helical segment. The Cytoplasmic portion of the chain corresponds to Gly-83 to Gln-238. Residues Val-239–Arg-255 form a helical membrane-spanning segment. Residues Gln-256 to Pro-274 lie on the Extracellular side of the membrane. The chain crosses the membrane as a helical span at residues Ile-275–Leu-288. At Lys-289–Ala-509 the chain is on the cytoplasmic side. Ca(2+) is bound by residues Gln-293, Asn-296, Asp-301, and Asp-304. The disordered stretch occupies residues Asp-454–Ala-509. Composition is skewed to pro residues over residues Leu-457 to Pro-468 and Pro-489 to Pro-498.

Belongs to the anion channel-forming bestrophin (TC 1.A.46) family. Calcium-sensitive chloride channel subfamily. Pentamer. Interacts with GLUL; this interaction tethers a fraction of GLUL to the membrane, causing a decrease of cytosolic glutamine synthase (GS) activity and inhibits the chloride channel activity of BEST2 by affecting the gating at the aperture in the absence of intracellular glutamate. As to expression, mainly confined to the retinal pigment epithelium. Expressed in colon.

The protein resides in the cell membrane. It localises to the basolateral cell membrane. It catalyses the reaction chloride(in) = chloride(out). The catalysed reaction is hydrogencarbonate(in) = hydrogencarbonate(out). The enzyme catalyses L-glutamate(out) = L-glutamate(in). It carries out the reaction iodide(out) = iodide(in). It catalyses the reaction L-glutamine(out) = L-glutamine(in). Its activity is regulated as follows. Chloride channel activity is allosterically inhibited by GLUL/glutamine synthase (GS) which affects the gating at the aperture in the absence of intracellular glutamate. Inhibitory effect of GLUL is relieved upon increasing of L-glutamate intracellular level. Ligand-gated anion channel that allows the movement of anions across cell membranes when activated by calcium (Ca2+). Transports a large specter of anions, namely mediates the movement of chloride, L-glutamate and iodide. Calcium-binding triggers the dilation of the aperture, but calcium-dependent gating is only effective when the size of the passing anion is bigger than the closed aperture. Mediates the calcium-activated hydrogencarbonate movement and participates in colonic hydrogencarbonate secretion concomitant with mucin secretion. In non-pigmented epithelium (NPE), mediates the efflux of intracellular L-glutamate; binding of intracellular L-glutamate activates and open both the neck and the aperture of the channel, leading to L-glutamate exit promoting chloride influx movement from the extracellular side in trans. Also exhibits a directional permeability for intracellular glutamine, in a similar manner as for L-glutamate. The protein is Bestrophin-2a of Homo sapiens (Human).